The following is a 149-amino-acid chain: Decarboxylase AgnL1 (149 aa).

An EthD domain is found at 30-125 (PGMSEEDYRH…VGDHEKFADT (96 aa)).

The protein belongs to the tpcK family.

The enzyme catalyses atrochrysone carboxylate + H(+) = atrochrysone + CO2. It functions in the pathway secondary metabolite biosynthesis. Functionally, decarboxylase; part of the gene cluster that mediates the biosynthesis of agnestins, dihydroxy-xanthone metabolites. The pathway begins with the assembly and cyclization of atrochrysone thioester by the non-reducing polyketide synthase Agnpks1. The atrochrysone carboxyl ACP thioesterase AgnL7 then breaks the thioester bond and releases the atrochrysone carboxylic acid as the first enzyme-free intermediate. The decarboxylase AgnL1 then catalyzes the concerted decarboxylation-elimination required to convert atochrysone carboxylic acid into emodin anthrone, which is further oxidized to emodin by the anthrone oxygenase AgnL2. Emodin then undergoes reduction catalyzed by the oxidoreductase AgnL4 to yield the dihydroquinone tautomer which is the substrate for reduction by the short chain dehydrogenase AgnL6 reduction to produce hydroxyketone, followed by AgnL8 dehydration and likely spontaneous autoxidation to chrysophanol. Baeyer-Villiger oxidation by the oxidase AgnL3 leads to monodictyphenone via cleavage of the C-10/C-10a bond of chrysophanol. Alternative cleavage at the C-4a/C-10 bond of chrysophanol also leads to the formation some cephalone F. Further conversion to agnestins A and B, requires reduction to dihydro-monodictyphenone, oxidation to agnestin C probably via an epoxide, and rearrangement to either agnestin A or agnestin B directly, although agnestin A or agnestin B can also interconvert. Within the cluster, AgnR1 is the only unassigned oxidoreductase present which could be involved in this conversion. However, AgnR1 seems not to be involved in this step, and thus genes involved in the proposed oxidation/reduction may be located elsewhere on the genome. Further agnestin A derivatives are probably formed by spontaneous decarboxylations, dehydrations and methanolysis reactions. In Paecilomyces divaricatus (Penicillium divaricatum), this protein is Decarboxylase AgnL1.